We begin with the raw amino-acid sequence, 543 residues long: MDSQTVGILGGGQLGRMIVEAAHRLNIKTVILENGDQAPAKQINALDDHIDGSFNDPKAIAELAAKCDVLTVEIEHVDTDALVEVQKATGIKIFPSPETISLIKDKYLQKEHLIKNGIAVAESCSVESSAASLEEVGAKYGFPYMLKSRTMAYDGRGNFVVKDKSYIPEALKVLDDRPLYAEKWAPFSKELAVMVVRSIDGQVYSYPTVETIHQNNICHTVFAPARVNDTVQKKAQILADNAVKSFPGAGIFGVEMFLLQNGDLLVNEIAPRPHNSGHYTIDACVTSQFEAHVRAITGLPMPKNFTCLSTPSTQAIMLNVLGGDEQNGEFKMCKRALETPHASVYLYGKTTRPGRKMGHINIVSQSMTDCERRLHYIEGTTNSIPLEEQYTTDSIPGTSSKPLVGVIMGSDSDLPVMSLGCNILKQFNVPFEVTIVSAHRTPQRMAKYAIDAPKRGLKCIIAGAGGAAHLPGMVAAMTPLPVIGVPVKGSTLDGVDSLHSIVQMPRGIPVATVAINNATNAALLAITILGAGDPNTCLQWKFI.

Positions 110–297 (KEHLIKNGIA…QFEAHVRAIT (188 aa)) constitute an ATP-grasp domain. 137-192 (GAKYGFPYMLKSRTMAYDGRGNFVVKDKSYIPEALKVLDDRPLYAEKWAPFSKELA) provides a ligand contact to ATP.

It in the C-terminal section; belongs to the AIR carboxylase family. Class I subfamily.

It carries out the reaction 5-amino-1-(5-phospho-D-ribosyl)imidazole-4-carboxylate + H(+) = 5-amino-1-(5-phospho-beta-D-ribosyl)imidazole + CO2. It functions in the pathway purine metabolism; IMP biosynthesis via de novo pathway; 5-amino-1-(5-phospho-D-ribosyl)imidazole-4-carboxylate from 5-amino-1-(5-phospho-D-ribosyl)imidazole (carboxylase route): step 1/1. This chain is Phosphoribosylaminoimidazole carboxylase (ADE1), found in Ogataea methanolica (Yeast).